The chain runs to 595 residues: Apolipoprotein N-acyltransferase 2 (595 aa).

Helical transmembrane passes span 30 to 50 (FLAFAPVSLTHFVWIAPFGFF), 63 to 83 (LFFHGLLIGVVFYAISFHWII), 95 to 115 (VVAILILLFAGLLFGLKFPIF), 167 to 187 (AEITGVYGISFLVFIVSYTLF), and 210 to 230 (FITLPALLLLTFIVSGIFLFK). One can recognise a CN hydrolase domain in the interval 241 to 555 (LNVLIVQPDA…AEALSETIDV (315 aa)). The active-site Proton acceptor is E293. K372 is an active-site residue. C463 (nucleophile) is an active-site residue. The chain crosses the membrane as a helical span at residues 569-589 (LIPWLMLFLTGIYYLNLLIGI).

It belongs to the CN hydrolase family. Apolipoprotein N-acyltransferase subfamily.

Its subcellular location is the cell inner membrane. The enzyme catalyses N-terminal S-1,2-diacyl-sn-glyceryl-L-cysteinyl-[lipoprotein] + a glycerophospholipid = N-acyl-S-1,2-diacyl-sn-glyceryl-L-cysteinyl-[lipoprotein] + a 2-acyl-sn-glycero-3-phospholipid + H(+). It participates in protein modification; lipoprotein biosynthesis (N-acyl transfer). In terms of biological role, catalyzes the phospholipid dependent N-acylation of the N-terminal cysteine of apolipoprotein, the last step in lipoprotein maturation. This chain is Apolipoprotein N-acyltransferase 2, found in Leptospira interrogans serogroup Icterohaemorrhagiae serovar copenhageni (strain Fiocruz L1-130).